The sequence spans 272 residues: Ribonuclease HII (272 aa).

The 186-residue stretch at 87-272 (KYVAGVDEVG…HRMSFLKNIL (186 aa)) folds into the RNase H type-2 domain. 3 residues coordinate a divalent metal cation: Asp93, Glu94, and Asp188.

It belongs to the RNase HII family. Requires Mn(2+) as cofactor. Mg(2+) serves as cofactor.

It is found in the cytoplasm. It carries out the reaction Endonucleolytic cleavage to 5'-phosphomonoester.. Endonuclease that specifically degrades the RNA of RNA-DNA hybrids. The polypeptide is Ribonuclease HII (Clostridium perfringens (strain SM101 / Type A)).